Consider the following 160-residue polypeptide: MRLLILAVGKLKQGPERELAERYRARFDDLGRKLGFRGLDVHEIAESRAREAPARMAEEAAAIIAQVQDGAVLVTLDERGQSLGSTAFAAQLGRWRDEQVPGTIFVIGGADGLLPELRRKAKLSMSFGGATWPHQMVRVMLLEQIYRAATILAGHPYHRA.

Residues L76 and G108 each contribute to the S-adenosyl-L-methionine site.

It belongs to the RNA methyltransferase RlmH family. Homodimer.

The protein localises to the cytoplasm. It catalyses the reaction pseudouridine(1915) in 23S rRNA + S-adenosyl-L-methionine = N(3)-methylpseudouridine(1915) in 23S rRNA + S-adenosyl-L-homocysteine + H(+). Its function is as follows. Specifically methylates the pseudouridine at position 1915 (m3Psi1915) in 23S rRNA. This Rhodopseudomonas palustris (strain TIE-1) protein is Ribosomal RNA large subunit methyltransferase H.